Consider the following 382-residue polypeptide: Galactokinase (382 aa).

34–37 (EHTD) contacts substrate. Residue 124-130 (GAGLSSS) participates in ATP binding. Residues Ser-130 and Glu-162 each coordinate Mg(2+). Asp-174 functions as the Proton acceptor in the catalytic mechanism. Tyr-223 provides a ligand contact to substrate.

This sequence belongs to the GHMP kinase family. GalK subfamily.

The protein localises to the cytoplasm. The enzyme catalyses alpha-D-galactose + ATP = alpha-D-galactose 1-phosphate + ADP + H(+). It participates in carbohydrate metabolism; galactose metabolism. Its function is as follows. Catalyzes the transfer of the gamma-phosphate of ATP to D-galactose to form alpha-D-galactose-1-phosphate (Gal-1-P). The sequence is that of Galactokinase from Salmonella paratyphi A (strain ATCC 9150 / SARB42).